A 192-amino-acid chain; its full sequence is UPF0149 protein YgfB (192 aa).

The protein belongs to the UPF0149 family.

The sequence is that of UPF0149 protein YgfB from Escherichia coli O127:H6 (strain E2348/69 / EPEC).